Here is a 1099-residue protein sequence, read N- to C-terminus: Carbamoyl phosphate synthase large chain (1099 aa).

Residues 1-402 form a carboxyphosphate synthetic domain region; that stretch reads MPKREDIKRI…ALGKALRSLE (402 aa). The ATP site is built by Arg-129, Arg-169, Gly-175, Gly-176, Glu-208, Val-210, Glu-215, Gly-241, Ile-242, His-243, Gln-285, and Glu-299. Positions 133 to 328 constitute an ATP-grasp 1 domain; that stretch reads KETMEKAGLE…IAKVAALLAV (196 aa). Mg(2+) contacts are provided by Gln-285, Glu-299, and Asn-301. Gln-285, Glu-299, and Asn-301 together coordinate Mn(2+). The oligomerization domain stretch occupies residues 403–541; the sequence is LDAAPKLDLE…STYNGVENEA (139 aa). Residues 542 to 944 are carbamoyl phosphate synthetic domain; sequence VPSDREKIMI…AFAKAQIAAG (403 aa). In terms of domain architecture, ATP-grasp 2 spans 666–857; it reads AKLLKQIGLK…VARIAAKIMV (192 aa). Positions 702, 741, 743, 748, 773, 774, 775, 776, 816, and 828 each coordinate ATP. Mg(2+) contacts are provided by Gln-816, Glu-828, and Asn-830. Residues Gln-816, Glu-828, and Asn-830 each contribute to the Mn(2+) site. The region spanning 945–1099 is the MGS-like domain; sequence NPLPTTGAIL…VRRLTDTWKM (155 aa). An allosteric domain region spans residues 945–1099; the sequence is NPLPTTGAIL…VRRLTDTWKM (155 aa).

The protein belongs to the CarB family. As to quaternary structure, composed of two chains; the small (or glutamine) chain promotes the hydrolysis of glutamine to ammonia, which is used by the large (or ammonia) chain to synthesize carbamoyl phosphate. Tetramer of heterodimers (alpha,beta)4. The cofactor is Mg(2+). Mn(2+) is required as a cofactor.

The catalysed reaction is hydrogencarbonate + L-glutamine + 2 ATP + H2O = carbamoyl phosphate + L-glutamate + 2 ADP + phosphate + 2 H(+). It catalyses the reaction hydrogencarbonate + NH4(+) + 2 ATP = carbamoyl phosphate + 2 ADP + phosphate + 2 H(+). The protein operates within amino-acid biosynthesis; L-arginine biosynthesis; carbamoyl phosphate from bicarbonate: step 1/1. It participates in pyrimidine metabolism; UMP biosynthesis via de novo pathway; (S)-dihydroorotate from bicarbonate: step 1/3. Functionally, large subunit of the glutamine-dependent carbamoyl phosphate synthetase (CPSase). CPSase catalyzes the formation of carbamoyl phosphate from the ammonia moiety of glutamine, carbonate, and phosphate donated by ATP, constituting the first step of 2 biosynthetic pathways, one leading to arginine and/or urea and the other to pyrimidine nucleotides. The large subunit (synthetase) binds the substrates ammonia (free or transferred from glutamine from the small subunit), hydrogencarbonate and ATP and carries out an ATP-coupled ligase reaction, activating hydrogencarbonate by forming carboxy phosphate which reacts with ammonia to form carbamoyl phosphate. In Thermotoga sp. (strain RQ2), this protein is Carbamoyl phosphate synthase large chain.